The chain runs to 359 residues: Peptide chain release factor 1 (359 aa).

Glutamine 236 carries the post-translational modification N5-methylglutamine. The segment at 288–307 (QDEQDAERKSTIGTGDRSER) is disordered. Residues 293–307 (AERKSTIGTGDRSER) are compositionally biased toward basic and acidic residues.

Belongs to the prokaryotic/mitochondrial release factor family. Methylated by PrmC. Methylation increases the termination efficiency of RF1.

It is found in the cytoplasm. Functionally, peptide chain release factor 1 directs the termination of translation in response to the peptide chain termination codons UAG and UAA. This Streptococcus sanguinis (strain SK36) protein is Peptide chain release factor 1.